The chain runs to 241 residues: NH(3)-dependent NAD(+) synthetase (241 aa).

29 to 36 (GISGGIDS) serves as a coordination point for ATP. Residue aspartate 35 participates in Mg(2+) binding. Arginine 110 is a deamido-NAD(+) binding site. Glutamate 135 is a Mg(2+) binding site. Lysine 143 and aspartate 150 together coordinate deamido-NAD(+). Residues lysine 159 and serine 181 each coordinate ATP. 226 to 227 (HK) contributes to the deamido-NAD(+) binding site.

It belongs to the NAD synthetase family. Homodimer.

It catalyses the reaction deamido-NAD(+) + NH4(+) + ATP = AMP + diphosphate + NAD(+) + H(+). Its pathway is cofactor biosynthesis; NAD(+) biosynthesis; NAD(+) from deamido-NAD(+) (ammonia route): step 1/1. Catalyzes the ATP-dependent amidation of deamido-NAD to form NAD. Uses ammonia as a nitrogen source. The sequence is that of NH(3)-dependent NAD(+) synthetase from Finegoldia magna (strain ATCC 29328 / DSM 20472 / WAL 2508) (Peptostreptococcus magnus).